We begin with the raw amino-acid sequence, 60 residues long: Disagregin (60 aa).

The Cell attachment site; atypical signature appears at 14-16; the sequence is RED.

As to expression, expressed in salivary glands.

The protein localises to the secreted. Functionally, tick salivary platelet aggregation inhibitor that plays an important part in the anti-hemostatic strategy of ticks. Inhibits fibrinogen interaction with platelets. Acts by binding (in a divalent metal ion dependent manner) to the glycoprotein IIb-IIIa receptor (ITGA2B/ITGB3) on the platelet surface and inhibits aggregation induced by ADP (IC(50)=99-104 nM), thrombin, collagen (IC(50)=64 nM) platelet-activating factor and collagen. Interacts to unstimulated platelets (Kd=42.5 nM) and to ADP-stimulated platelets (Kd=39.4 nM). In contrast to many disintegrins which only interact with the beta-3 subunit, interacts with the two subunits (alpha-IIb and beta-3). Under flow conditions, reduces and delays platelet adhesion, aggregation, and fibrin formation. The protein is Disagregin of Ornithodoros moubata (Soft tick).